We begin with the raw amino-acid sequence, 447 residues long: Exodeoxyribonuclease 7 large subunit (447 aa).

Belongs to the XseA family. In terms of assembly, heterooligomer composed of large and small subunits.

The protein localises to the cytoplasm. It carries out the reaction Exonucleolytic cleavage in either 5'- to 3'- or 3'- to 5'-direction to yield nucleoside 5'-phosphates.. Functionally, bidirectionally degrades single-stranded DNA into large acid-insoluble oligonucleotides, which are then degraded further into small acid-soluble oligonucleotides. The sequence is that of Exodeoxyribonuclease 7 large subunit from Lactiplantibacillus plantarum (strain ATCC BAA-793 / NCIMB 8826 / WCFS1) (Lactobacillus plantarum).